The sequence spans 671 residues: uncharacterized protein (671 aa).

A helical membrane pass occupies residues 39-56 (ATVTVVILLLILLLGWGY).

The protein resides in the membrane. This is an uncharacterized protein from Treponema pallidum (strain Nichols).